A 377-amino-acid chain; its full sequence is Dual-specificity RNA methyltransferase RlmN (377 aa).

E102 serves as the catalytic Proton acceptor. The region spanning 108–345 (EPDRRTLCVS…AVVRKNRGGD (238 aa)) is the Radical SAM core domain. A disulfide bridge connects residues C115 and C350. Residues C122, C126, and C129 each contribute to the [4Fe-4S] cluster site. S-adenosyl-L-methionine contacts are provided by residues 177-178 (GE), S209, 231-233 (SLN), and N307. Residue C350 is the S-methylcysteine intermediate of the active site. The segment at 354-377 (AAEGGPGDPRRPAPPPLTRLPAAG) is disordered.

This sequence belongs to the radical SAM superfamily. RlmN family. It depends on [4Fe-4S] cluster as a cofactor.

The protein localises to the cytoplasm. The catalysed reaction is adenosine(2503) in 23S rRNA + 2 reduced [2Fe-2S]-[ferredoxin] + 2 S-adenosyl-L-methionine = 2-methyladenosine(2503) in 23S rRNA + 5'-deoxyadenosine + L-methionine + 2 oxidized [2Fe-2S]-[ferredoxin] + S-adenosyl-L-homocysteine. The enzyme catalyses adenosine(37) in tRNA + 2 reduced [2Fe-2S]-[ferredoxin] + 2 S-adenosyl-L-methionine = 2-methyladenosine(37) in tRNA + 5'-deoxyadenosine + L-methionine + 2 oxidized [2Fe-2S]-[ferredoxin] + S-adenosyl-L-homocysteine. In terms of biological role, specifically methylates position 2 of adenine 2503 in 23S rRNA and position 2 of adenine 37 in tRNAs. m2A2503 modification seems to play a crucial role in the proofreading step occurring at the peptidyl transferase center and thus would serve to optimize ribosomal fidelity. This is Dual-specificity RNA methyltransferase RlmN from Anaeromyxobacter sp. (strain Fw109-5).